The following is a 398-amino-acid chain: Cytochrome P450 165B3 (398 aa).

C347 contacts heme.

This sequence belongs to the cytochrome P450 family. Heme serves as cofactor.

It functions in the pathway antibiotic biosynthesis; vancomycin biosynthesis. Involved in the coupling of aromatic side chains of the heptapeptide of vancomycin. This is Cytochrome P450 165B3 (cyp165B3) from Amycolatopsis orientalis (Nocardia orientalis).